Consider the following 143-residue polypeptide: UPF0179 protein PTO0851 (143 aa).

Belongs to the UPF0179 family.

The polypeptide is UPF0179 protein PTO0851 (Picrophilus torridus (strain ATCC 700027 / DSM 9790 / JCM 10055 / NBRC 100828 / KAW 2/3)).